A 336-amino-acid chain; its full sequence is Phosphate acyltransferase (336 aa).

Belongs to the PlsX family. Homodimer. Probably interacts with PlsY.

It is found in the cytoplasm. It catalyses the reaction a fatty acyl-[ACP] + phosphate = an acyl phosphate + holo-[ACP]. The protein operates within lipid metabolism; phospholipid metabolism. Catalyzes the reversible formation of acyl-phosphate (acyl-PO(4)) from acyl-[acyl-carrier-protein] (acyl-ACP). This enzyme utilizes acyl-ACP as fatty acyl donor, but not acyl-CoA. The protein is Phosphate acyltransferase of Dictyoglomus thermophilum (strain ATCC 35947 / DSM 3960 / H-6-12).